Reading from the N-terminus, the 318-residue chain is Bis(5'-nucleosyl)-tetraphosphatase, symmetrical (318 aa).

Positions Pro269–Asp318 are disordered. Residues Ala282 to Gly297 show a composition bias toward basic residues.

Belongs to the Ap4A hydrolase family.

It catalyses the reaction P(1),P(4)-bis(5'-adenosyl) tetraphosphate + H2O = 2 ADP + 2 H(+). Functionally, hydrolyzes diadenosine 5',5'''-P1,P4-tetraphosphate to yield ADP. In Xanthomonas oryzae pv. oryzae (strain KACC10331 / KXO85), this protein is Bis(5'-nucleosyl)-tetraphosphatase, symmetrical.